A 316-amino-acid chain; its full sequence is Annexin A13 (316 aa).

G2 is lipidated: N-myristoyl glycine. Annexin repeat units lie at residues 14–85 (FDVD…ALLD), 86–157 (RPSE…SLLQ), 169–241 (DLAG…TLVR), and 245–316 (DQEG…ALLH).

Belongs to the annexin family. As to quaternary structure, monomer and homodimer. Detected in intestine, and at much lower levels also in kidney (at protein level).

It localises to the apical cell membrane. The protein resides in the cell membrane. Its subcellular location is the cytoplasmic vesicle. In terms of biological role, binds to membranes enriched in phosphatidylserine or phosphatidylglycerol in a calcium-dependent manner. Half-maximal membrane binding requires about 60 uM calcium. Does not bind to membranes that lack phospholipids with an acidic headgroup. Functionally, binds to membranes enriched in phosphatidylserine or phosphatidylglycerol in a calcium-dependent manner, but requires higher calcium levels for membrane binding than isoform A. Half-maximal membrane binding requires about 320 uM calcium. May play a role in vesicular traffic to the apical plasma membrane. The protein is Annexin A13 (ANXA13) of Canis lupus familiaris (Dog).